The following is a 435-amino-acid chain: Eukaryotic peptide chain release factor subunit 1-2 (435 aa).

At A2 the chain carries N-acetylalanine.

It belongs to the eukaryotic release factor 1 family. Heterodimer of two subunits, one of which binds GTP. Interacts with OR.

The protein localises to the cytoplasm. In terms of biological role, directs the termination of nascent peptide synthesis (translation) in response to the termination codons UAA, UAG and UGA. Modulates plant growth and development. This Brassica oleracea var. botrytis (Cauliflower) protein is Eukaryotic peptide chain release factor subunit 1-2.